The sequence spans 312 residues: Ribosomal protein uL3 glutamine methyltransferase (312 aa).

It belongs to the protein N5-glutamine methyltransferase family. PrmB subfamily.

It carries out the reaction L-glutaminyl-[ribosomal protein uL3] + S-adenosyl-L-methionine = N(5)-methyl-L-glutaminyl-[ribosomal protein uL3] + S-adenosyl-L-homocysteine + H(+). In terms of biological role, methylates large ribosomal subunit protein uL3 on a specific glutamine residue. The polypeptide is Ribosomal protein uL3 glutamine methyltransferase (Xylella fastidiosa (strain Temecula1 / ATCC 700964)).